The primary structure comprises 162 residues: 2-C-methyl-D-erythritol 2,4-cyclodiphosphate synthase (162 aa).

D10 and H12 together coordinate a divalent metal cation. Residues 10 to 12 and 36 to 37 contribute to the 4-CDP-2-C-methyl-D-erythritol 2-phosphate site; these read DVH and HS. A divalent metal cation is bound at residue H44. Residues 58–60, 63–67, and R144 contribute to the 4-CDP-2-C-methyl-D-erythritol 2-phosphate site; these read DIG and FPDTD.

Belongs to the IspF family. Homotrimer. Requires a divalent metal cation as cofactor.

The enzyme catalyses 4-CDP-2-C-methyl-D-erythritol 2-phosphate = 2-C-methyl-D-erythritol 2,4-cyclic diphosphate + CMP. Its pathway is isoprenoid biosynthesis; isopentenyl diphosphate biosynthesis via DXP pathway; isopentenyl diphosphate from 1-deoxy-D-xylulose 5-phosphate: step 4/6. Functionally, involved in the biosynthesis of isopentenyl diphosphate (IPP) and dimethylallyl diphosphate (DMAPP), two major building blocks of isoprenoid compounds. Catalyzes the conversion of 4-diphosphocytidyl-2-C-methyl-D-erythritol 2-phosphate (CDP-ME2P) to 2-C-methyl-D-erythritol 2,4-cyclodiphosphate (ME-CPP) with a corresponding release of cytidine 5-monophosphate (CMP). This is 2-C-methyl-D-erythritol 2,4-cyclodiphosphate synthase from Laribacter hongkongensis (strain HLHK9).